Reading from the N-terminus, the 163-residue chain is MYTSKQPFHKSKQTFHKSKQTFRKSKQTFRKFKQPFRKPKQPFRRRPRIGPGDRIDYRNMSLINRFISEQGKILSRRINRLTLKQQRLITLAIKQARILSFLPFRNYENEKQFQAQSISIITGPRPRKNRHIPPLTQKFNSNRNLRNSNQTLRNNNRNLSSDC.

2 disordered regions span residues 1–54 (MYTS…PGDR) and 121–163 (ITGP…SSDC). The span at 7–48 (PFHKSKQTFHKSKQTFRKSKQTFRKFKQPFRKPKQPFRRRPR) shows a compositional bias: basic residues. The segment covering 140–163 (NSNRNLRNSNQTLRNNNRNLSSDC) has biased composition (low complexity).

It belongs to the bacterial ribosomal protein bS18 family. In terms of assembly, part of the 30S ribosomal subunit.

The protein localises to the plastid. The protein resides in the chloroplast. The chain is Small ribosomal subunit protein bS18c from Oryza nivara (Indian wild rice).